Here is a 174-residue protein sequence, read N- to C-terminus: Small ribosomal subunit protein uS7c (174 aa).

The protein belongs to the universal ribosomal protein uS7 family. Part of the 30S ribosomal subunit.

It localises to the plastid. Its subcellular location is the chloroplast. One of the primary rRNA binding proteins, it binds directly to 16S rRNA where it nucleates assembly of the head domain of the 30S subunit. In Stigeoclonium helveticum (Green alga), this protein is Small ribosomal subunit protein uS7c (rps7).